The chain runs to 122 residues: T cell receptor gamma variable 9 (122 aa).

The signal sequence occupies residues 1–20 (MLSLLHTSTLAVLGALCVYG). The region spanning 27–122 (PQISSTKTLS…ATYYCALWEV (96 aa)) is the Ig-like domain. Residues Cys-43 and Cys-117 are joined by a disulfide bond.

As to quaternary structure, gamma-delta TR is a heterodimer composed of a gamma and delta chain; disulfide-linked. The gamma-delta TR is associated with the transmembrane signaling CD3 coreceptor proteins following the stoichiometry: a single gamma-delta TR heterodimer associates with one CD3D-CD3E heterodimer, one CD3G-CD3E heterodimer and one CD247 homodimer forming a stable octameric structure. Upon activation, gamma-delta TR complex associates with FCER1G to initiate intracellular signaling.

It localises to the cell membrane. V region of the variable domain of T cell receptor (TR) gamma chain that participates in the antigen recognition. Gamma-delta TRs recognize a variety of self and foreign non-peptide antigens frequently expressed at the epithelial boundaries between the host and external environment, including endogenous lipids presented by MH-like protein CD1D and phosphoantigens presented by butyrophilin-like molecule BTN3A1. Upon antigen recognition induces rapid, innate-like immune responses involved in pathogen clearance and tissue repair. Binding of gamma-delta TR complex to antigen triggers phosphorylation of immunoreceptor tyrosine-based activation motifs (ITAMs) in the CD3 chains by the LCK and FYN kinases, allowing the recruitment, phosphorylation, and activation of ZAP70 that facilitates phosphorylation of the scaffolding proteins LCP2 and LAT. This lead to the formation of a supramolecular signalosome that recruits the phospholipase PLCG1, resulting in calcium mobilization and ERK activation, ultimately leading to T cell expansion and differentiation into effector cells. Gamma-delta TRs are produced through somatic rearrangement of a limited repertoire of variable (V), diversity (D), and joining (J) genes. The potential diversity of gamma-delta TRs is conferred by the unique ability to rearrange (D) genes in tandem and to utilize all three reading frames. The combinatorial diversity is considerably increased by the sequence exonuclease trimming and random nucleotide (N) region additions which occur during the V-(D)-J rearrangements. The chain is T cell receptor gamma variable 9 from Homo sapiens (Human).